Reading from the N-terminus, the 784-residue chain is MGDEKDSWKVKTLDEILQEKKRRKEQEEKAEIKRLKNSDDRDSKRDSLEEGELRDHRMEITIRNSPYRREDSMEDRGEEDDSLAIKPPQQMSRKEKAHHRKDEKRKEKRRHRSHSAEGGKHARVKEKEREHERRKRHREEQDKARREWERQKRREMAREHSRRERDRLEQLERKRERERKLREQQKEQREQKERERRAEERRKEREARREVSAHHRTMREEYSDKGKVGHWSRSPLRPPRERFEMGDNRKPVKEEKVEERDLLSDLQDISDSERKTSSAESSSAESGSGSEEEEEEEEEEEEEEGSTSEESEEEEEEEEEEEEEETGSNSEEASEQSAEEVSDEEMSEDEDRENENHILVVPESRFDRDSGDSEEGEEEVGEGTPQSSAPTEGDYVPDSPALSPIELKQELPKYLPALQGCRSVEEFQCLNRIEEGTYGVVYRAKDKKTDEIVALKRLKMEKEKEGFPITSLREINTILKAQHPNIVTVREIVVGSNMDKIYIVMNYVEHDLKSLMETMKQPFLPGEVKTLMIQLLSGVKHLHDNWILHRDLKTSNLLLSHAGILKVGDFGLAREYGSPLKAYTPVVVTLWYRAPELLLGAKEYSTAVDMWSVGCIFGELLTQKPLFPGKSDIDQINKIFKDLGTPSEKIWPGYNDLPAVKKMTFSEYPYNNLRKRFGALLSDQGFDLMNKFLTYYPGRRINAEDGLKHEYFRETPLPIDPSMFPTWPAKSEQQRVKRGTSPRPPEGGLGYSQLGDDDLKETGFHLTTTNQGASAAGPGFSLKF.

Residues 18–60 (QEKKRRKEQEEKAEIKRLKNSDDRDSKRDSLEEGELRDHRMEI) show a composition bias toward basic and acidic residues. Positions 18–401 (QEKKRRKEQE…EGDYVPDSPA (384 aa)) are disordered. 2 positions are modified to phosphoserine: S47 and S72. Basic residues predominate over residues 95-113 (EKAHHRKDEKRKEKRRHRS). Basic and acidic residues-rich tracts occupy residues 114-131 (HSAE…EREH), 138-227 (REEQ…DKGK), and 238-263 (PPRE…RDLL). Position 115 is a phosphoserine (S115). Residue S270 is modified to Phosphoserine. Low complexity predominate over residues 278–289 (SAESSSAESGSG). 2 stretches are compositionally biased toward acidic residues: residues 290-353 (SEEE…EDRE) and 372-381 (DSEEGEEEVG). The Protein kinase domain occupies 427–712 (FQCLNRIEEG…AEDGLKHEYF (286 aa)). Residues 433–441 (IEEGTYGVV) and K456 contribute to the ATP site. S471 is subject to Phosphoserine; by CDK7. Position 477 is a phosphothreonine; by CDK7 (T477). D551 serves as the catalytic Proton acceptor. S578 is modified (phosphoserine). Y583 is subject to Phosphotyrosine. T584 carries the post-translational modification Phosphothreonine. K630 participates in a covalent cross-link: Glycyl lysine isopeptide (Lys-Gly) (interchain with G-Cter in SUMO2). Residues 722 to 784 (SMFPTWPAKS…AAGPGFSLKF (63 aa)) are disordered. T740 is modified (phosphothreonine). S741 bears the Phosphoserine mark.

This sequence belongs to the protein kinase superfamily. CMGC Ser/Thr protein kinase family. CDC2/CDKX subfamily. May interact PAK1 and RANBP9. p110C interacts with RNPS1. Interacts with CCND3. Interacts with CCNL1 and CCNL2. Forms complexes with pre-mRNA-splicing factors, including at least SRSF1, SRSF2 AND SRSF7/SLU7. Requires Mg(2+) as cofactor. Post-translationally, phosphorylation at Ser-115 creates a binding site for 14-3-3 proteins.

The catalysed reaction is L-seryl-[protein] + ATP = O-phospho-L-seryl-[protein] + ADP + H(+). It carries out the reaction L-threonyl-[protein] + ATP = O-phospho-L-threonyl-[protein] + ADP + H(+). With respect to regulation, phosphorylation at Thr-437 or Tyr-438 inactivates the enzyme, while phosphorylation at Thr-584 activates it. Plays multiple roles in cell cycle progression, cytokinesis and apoptosis. Involved in pre-mRNA splicing in a kinase activity-dependent manner. May act as a negative regulator of normal cell cycle progression. The sequence is that of Cyclin-dependent kinase 11B (Cdk11b) from Mus musculus (Mouse).